The sequence spans 460 residues: GTPase Der (460 aa).

2 EngA-type G domains span residues 2 to 164 (QSII…HEEF) and 196 to 368 (IRVG…ENFT). Residues 8–15 (GKPNVGKS), 55–59 (DSGGL), 116–119 (NKVD), 202–209 (GRVNVGKS), 249–253 (DTAGI), and 313–316 (NKWD) contribute to the GTP site. Positions 369 to 453 (QKIQTSKLNT…PLVIASRKKG (85 aa)) constitute a KH-like domain.

It belongs to the TRAFAC class TrmE-Era-EngA-EngB-Septin-like GTPase superfamily. EngA (Der) GTPase family. As to quaternary structure, associates with the 50S ribosomal subunit.

Its function is as follows. GTPase that plays an essential role in the late steps of ribosome biogenesis. In Campylobacter jejuni subsp. jejuni serotype O:2 (strain ATCC 700819 / NCTC 11168), this protein is GTPase Der.